The following is a 305-amino-acid chain: MSATLPDVAVTEPSTLSAPLRWVGMQDIAIPVQLEAGGGQLAARASVQVDLPRAELKGIHMSRLYRLLDTQLQQPVSPAMLSGLLQALIESHADCASRAARLTLSGELMLRTPALRSEGLSGWRAYPVHIAAQCSAGRTTIQLQAEVLYASTCPCSAALSRQLLSDAFVQQHAGRDALALDEVAQWLQDHGSYATPHSQRSVAQVRVELPADAQRLAIRQLVGLCEQALATPVQAAVRRPDEQAFARLNGANLMYVEDAARRLRQQLAEHYAAFHVAVRHLESLHAHDAVAETDSDDAVLGPTTM.

Belongs to the GTP cyclohydrolase IV family.

The enzyme catalyses GTP + H2O = 7,8-dihydroneopterin 3'-triphosphate + formate + H(+). Its pathway is cofactor biosynthesis; 7,8-dihydroneopterin triphosphate biosynthesis; 7,8-dihydroneopterin triphosphate from GTP: step 1/1. Functionally, converts GTP to 7,8-dihydroneopterin triphosphate. This is GTP cyclohydrolase FolE2 from Xanthomonas euvesicatoria pv. vesicatoria (strain 85-10) (Xanthomonas campestris pv. vesicatoria).